The sequence spans 419 residues: Tryptophan synthase beta chain (419 aa).

Lys86 carries the post-translational modification N6-(pyridoxal phosphate)lysine. Residues Val394–Lys403 show a composition bias toward basic and acidic residues. The disordered stretch occupies residues Val394 to Glu419. Residues Ala404 to Glu419 show a composition bias toward polar residues.

Belongs to the TrpB family. As to quaternary structure, tetramer of two alpha and two beta chains. Pyridoxal 5'-phosphate serves as cofactor.

It carries out the reaction (1S,2R)-1-C-(indol-3-yl)glycerol 3-phosphate + L-serine = D-glyceraldehyde 3-phosphate + L-tryptophan + H2O. The protein operates within amino-acid biosynthesis; L-tryptophan biosynthesis; L-tryptophan from chorismate: step 5/5. Functionally, the beta subunit is responsible for the synthesis of L-tryptophan from indole and L-serine. The sequence is that of Tryptophan synthase beta chain from Shewanella halifaxensis (strain HAW-EB4).